We begin with the raw amino-acid sequence, 371 residues long: Bifunctional enzyme IspD/IspF (371 aa).

Positions 1–212 are 2-C-methyl-D-erythritol 4-phosphate cytidylyltransferase; it reads MKDITLVLLA…FDFTPASGTI (212 aa). The interval 213 to 371 is 2-C-methyl-D-erythritol 2,4-cyclodiphosphate synthase; that stretch reads FTGNGFDVHA…NLGYFDWRKF (159 aa). A divalent metal cation contacts are provided by aspartate 219 and histidine 221. Residues 219–221 and 245–246 each bind 4-CDP-2-C-methyl-D-erythritol 2-phosphate; these read DVH and HS. Histidine 253 serves as a coordination point for a divalent metal cation. 4-CDP-2-C-methyl-D-erythritol 2-phosphate contacts are provided by residues 267–269, 272–276, 341–344, phenylalanine 348, and arginine 351; these read DIG, FPDTD, and STTE.

This sequence in the N-terminal section; belongs to the IspD/TarI cytidylyltransferase family. IspD subfamily. The protein in the C-terminal section; belongs to the IspF family. Requires a divalent metal cation as cofactor.

The enzyme catalyses 2-C-methyl-D-erythritol 4-phosphate + CTP + H(+) = 4-CDP-2-C-methyl-D-erythritol + diphosphate. It carries out the reaction 4-CDP-2-C-methyl-D-erythritol 2-phosphate = 2-C-methyl-D-erythritol 2,4-cyclic diphosphate + CMP. It functions in the pathway isoprenoid biosynthesis; isopentenyl diphosphate biosynthesis via DXP pathway; isopentenyl diphosphate from 1-deoxy-D-xylulose 5-phosphate: step 2/6. The protein operates within isoprenoid biosynthesis; isopentenyl diphosphate biosynthesis via DXP pathway; isopentenyl diphosphate from 1-deoxy-D-xylulose 5-phosphate: step 4/6. Bifunctional enzyme that catalyzes the formation of 4-diphosphocytidyl-2-C-methyl-D-erythritol from CTP and 2-C-methyl-D-erythritol 4-phosphate (MEP) (IspD), and catalyzes the conversion of 4-diphosphocytidyl-2-C-methyl-D-erythritol 2-phosphate (CDP-ME2P) to 2-C-methyl-D-erythritol 2,4-cyclodiphosphate (ME-CPP) with a corresponding release of cytidine 5-monophosphate (CMP) (IspF). This is Bifunctional enzyme IspD/IspF from Campylobacter hominis (strain ATCC BAA-381 / DSM 21671 / CCUG 45161 / LMG 19568 / NCTC 13146 / CH001A).